We begin with the raw amino-acid sequence, 345 residues long: Cytoplasmic envelopment protein 2 (345 aa).

A nuclear localization signal 1 region spans residues 26–35; sequence KLVGKSRKHR. Positions 55–63 are nuclear export signal; sequence CILCQLLLF. The tract at residues 90–94 is nuclear localization signal 2; it reads RRRRR.

It belongs to the herpesviridae cytoplasmic envelopment protein 2 family. As to quaternary structure, interacts with cytoplasmic envelopment protein 3 and with the capsid. Interacts with host STING1; this interaction prevents viral DNA-triggered antiviral immune response.

The protein resides in the virion tegument. The protein localises to the host cytoplasm. Its subcellular location is the host nucleus. Its function is as follows. Plays a critical role in cytoplasmic virus egress. Participates in the final step of tegumentation and envelope acquisition within the host cytoplasm by directly interacting with the capsid. Upon virion binding to target cell, a signaling cascade is triggered to disrupt the interaction with the capsid, thereby preparing capsid uncoating. Additionally, antagonizes the viral DNA-triggered antiviral immune response by targeting host STING1 and preventing its dimerization and trafficking. The protein is Cytoplasmic envelopment protein 2 (UL94) of Homo sapiens (Human).